The following is a 687-amino-acid chain: DNA ligase (687 aa).

NAD(+) contacts are provided by residues 33-37 (DAEFD), 83-84 (SL), and Glu-113. The active-site N6-AMP-lysine intermediate is the Lys-115. NAD(+) contacts are provided by Arg-136, Glu-176, Lys-292, and Lys-316. The Zn(2+) site is built by Cys-410, Cys-413, Cys-429, and Cys-435. One can recognise a BRCT domain in the interval 599–687 (SVPRTLAGVT…GPPAEVGEPT (89 aa)).

It belongs to the NAD-dependent DNA ligase family. LigA subfamily. Requires Mg(2+) as cofactor. The cofactor is Mn(2+).

The catalysed reaction is NAD(+) + (deoxyribonucleotide)n-3'-hydroxyl + 5'-phospho-(deoxyribonucleotide)m = (deoxyribonucleotide)n+m + AMP + beta-nicotinamide D-nucleotide.. Its function is as follows. DNA ligase that catalyzes the formation of phosphodiester linkages between 5'-phosphoryl and 3'-hydroxyl groups in double-stranded DNA using NAD as a coenzyme and as the energy source for the reaction. It is essential for DNA replication and repair of damaged DNA. This is DNA ligase from Mycobacterium marinum (strain ATCC BAA-535 / M).